The following is a 112-amino-acid chain: Cytochrome c-551 (112 aa).

The signal sequence occupies residues 1–20 (MKSKLSILMIGFALSVLLAA). Cys-21 carries the N-palmitoyl cysteine lipid modification. Cys-21 is lipidated: S-diacylglycerol cysteine. Residues 25 to 35 (DAKEEKTDTGS) show a composition bias toward basic and acidic residues. A disordered region spans residues 25–44 (DAKEEKTDTGSKTEATASEG). A Cytochrome c domain is found at 39 to 112 (ATASEGEELY…VIAKWLSEKK (74 aa)). Residues Cys-52, Cys-55, His-56, and Met-91 each coordinate heme c.

Binds 1 heme c group covalently per subunit.

Its subcellular location is the cell membrane. Its function is as follows. Electron carrier protein. The polypeptide is Cytochrome c-551 (cccB) (Bacillus subtilis (strain 168)).